A 251-amino-acid chain; its full sequence is Transcription initiation factor TFIID subunit 9B (251 aa).

The residue at position 1 (methionine 1) is an N-acetylmethionine. Phosphoserine is present on serine 147. Residues threonine 159 and threonine 174 each carry the phosphothreonine modification. Serine 177 bears the Phosphoserine mark. Positions glutamine 229–methionine 251 are disordered.

The protein belongs to the TAF9 family. In terms of assembly, binds TAF5 and TAF6. Component of TFIID and the TATA-binding protein-free TAF complex (TFTC). TFIID is composed of TATA binding protein (TBP) and a number of TBP-associated factors (TAFs). Binds N-terminal domain of p53/TP53 which is essential for transcription.

It localises to the nucleus. In terms of biological role, essential for cell viability. TAF9 and TAF9B are involved in transcriptional activation as well as repression of distinct but overlapping sets of genes. May have a role in gene regulation associated with apoptosis. TAFs are components of the transcription factor IID (TFIID) complex, the TBP-free TAFII complex (TFTC), the PCAF histone acetylase complex and the STAGA transcription coactivator-HAT complex. TFIID or TFTC are essential for the regulation of RNA polymerase II-mediated transcription. The chain is Transcription initiation factor TFIID subunit 9B (TAF9B) from Homo sapiens (Human).